Consider the following 80-residue polypeptide: Conotoxin Cl10.1 (80 aa).

An N-terminal signal peptide occupies residues 1 to 20 (MTTLGMTMLVLLLLLPLATC). Positions 21 to 36 (LGDGERSPWDSLLRAL) are excised as a propeptide.

Post-translationally, contains 4 disulfide bonds. Expressed by the venom duct.

It is found in the secreted. This Californiconus californicus (California cone) protein is Conotoxin Cl10.1.